A 272-amino-acid polypeptide reads, in one-letter code: tRNA pseudouridine synthase B (272 aa).

Asp-38 acts as the Nucleophile in catalysis.

The protein belongs to the pseudouridine synthase TruB family. Type 1 subfamily.

It carries out the reaction uridine(55) in tRNA = pseudouridine(55) in tRNA. Functionally, responsible for synthesis of pseudouridine from uracil-55 in the psi GC loop of transfer RNAs. In Campylobacter jejuni subsp. jejuni serotype O:2 (strain ATCC 700819 / NCTC 11168), this protein is tRNA pseudouridine synthase B.